Consider the following 216-residue polypeptide: Ornithine decarboxylase antizyme 1 (216 aa).

The protein belongs to the ODC antizyme family. Interacts with ODC1 and thereby sterically blocks ODC homodimerization.

Functionally, ornithine decarboxylase (ODC) antizyme protein that negatively regulates ODC activity and intracellular polyamine biosynthesis and uptake in response to increased intracellular polyamine levels. Binds to ODC monomers, inhibiting the assembly of the functional ODC homodimer, and targets the monomers for ubiquitin-independent proteolytic destruction by the 26S proteasome. This chain is Ornithine decarboxylase antizyme 1 (oaz1), found in Xenopus laevis (African clawed frog).